A 468-amino-acid chain; its full sequence is uncharacterized protein (468 aa).

A disordered region spans residues 447–468 (AVHVSNGDKPKVALPDTQLGSH).

The protein belongs to the mycobacterial PPE family.

This is an uncharacterized protein from Mycobacterium tuberculosis (strain ATCC 25618 / H37Rv).